The chain runs to 118 residues: Crustacean hyperglycemic hormones 2 (118 aa).

The first 22 residues, 1–22 (MTAFRLVAVALVVVVACSTTWA), serve as a signal peptide directing secretion. 3 disulfide bridges follow: cysteine 51–cysteine 87, cysteine 67–cysteine 83, and cysteine 70–cysteine 96. The residue at position 116 (valine 116) is a Valine amide.

It belongs to the arthropod CHH/MIH/GIH/VIH hormone family.

Its subcellular location is the secreted. In terms of biological role, hormone found in the sinus gland of isopods and decapods which controls the blood sugar level. Has a secretagogue action over the amylase released from the midgut gland. May act as a stress hormone and may be involved in the control of molting and reproduction. This is Crustacean hyperglycemic hormones 2 (CHH2) from Penaeus monodon (Giant tiger prawn).